Here is a 104-residue protein sequence, read N- to C-terminus: Guanidinium exporter (104 aa).

Residues 1–3 (MSW) lie on the Cytoplasmic side of the membrane. A helical transmembrane segment spans residues 4-26 (IILFVAGLLEIVWAVGLKYTHGF). The Periplasmic portion of the chain corresponds to 27-32 (TRLTPS). The chain crosses the membrane as a helical span at residues 33-50 (IITISAMIVSMGMLSYAM). At 51–54 (KGLP) the chain is on the cytoplasmic side. Residues 55–77 (AGTAYAIWTGIGAVGTAIFGIIV) form a helical membrane-spanning segment. Residues 78 to 83 (FGESAN) are Periplasmic-facing. Residues 84-103 (IYRLLSLAMIVFGIIGLKLA) traverse the membrane as a helical segment. A topological domain (cytoplasmic) is located at residue S104.

Belongs to the drug/metabolite transporter (DMT) superfamily. Small multidrug resistance (SMR) (TC 2.A.7.1) family. Gdx/SugE subfamily.

The protein localises to the cell inner membrane. Guanidinium ion exporter. Couples guanidinium export to the proton motive force, exchanging one guanidinium ion for two protons. The sequence is that of Guanidinium exporter from Proteus vulgaris.